Reading from the N-terminus, the 241-residue chain is Folate receptor alpha (241 aa).

Positions 1-19 (MAWQMTQLLLLALVAAAWG) are cleaved as a signal peptide. Disulfide bonds link Cys36–Cys64, Cys56–Cys104, Cys65–Cys108, Cys88–Cys174, Cys95–Cys145, Cys134–Cys208, Cys138–Cys188, and Cys151–Cys168. N-linked (GlcNAc...) asparagine glycosylation occurs at Asn68. Folate contacts are provided by residues Asp102, Tyr106, 123 to 127 (WRKER), 156 to 161 (HKGWNW), and Ser195. A glycan (N-linked (GlcNAc...) asparagine) is linked at Asn160. A lipid anchor (GPI-anchor amidated serine) is attached at Ser234. Residues 235 to 241 (GSTPQGI) constitute a propeptide, removed in mature form.

The protein belongs to the folate receptor family. In terms of processing, the secreted form is derived from the membrane-bound form either by cleavage of the GPI anchor, or/and by proteolysis catalyzed by a metalloprotease. Detected in milk (at protein level).

Its subcellular location is the cell membrane. The protein resides in the apical cell membrane. It localises to the basolateral cell membrane. It is found in the secreted. The protein localises to the cytoplasmic vesicle. Its subcellular location is the clathrin-coated vesicle. The protein resides in the endosome. Binds to folate and reduced folic acid derivatives and mediates delivery of 5-methyltetrahydrofolate and folate analogs into the interior of cells. Has high affinity for folate and folic acid analogs at neutral pH. Exposure to slightly acidic pH after receptor endocytosis triggers a conformation change that strongly reduces its affinity for folates and mediates their release. Required for normal embryonic development and normal cell proliferation. This is Folate receptor alpha (FOLR1) from Bos taurus (Bovine).